A 245-amino-acid polypeptide reads, in one-letter code: Lytic switch protein BZLF1 (245 aa).

A transactivation region spans residues 1–167 (MMDPNSTSED…RTRKPLQPES (167 aa)). A phosphothreonine mark is found at threonine 14 and threonine 159. The disordered stretch occupies residues 145 to 167 (GAPQPAPAAAPARRTRKPLQPES). The short motif at 157 to 194 (RRTRKPLQPESLEECDSELEIKRYKNRVASRKCRAKFK) is the Bipartite nuclear localization signal element. Residues serine 167, serine 173, and serine 186 each carry the phosphoserine modification. Residues 178-195 (KRYKNRVASRKCRAKFKH) are basic motif. Residues 178 to 228 (KRYKNRVASRKCRAKFKHLLQHYREVASAKSSENDRLRLLLKQMCPSLDVD) enclose the bZIP domain. Residues 196–228 (LLQHYREVASAKSSENDRLRLLLKQMCPSLDVD) are leucine-zipper. The interval 229–245 (SIIPRTPDVLHEDLLNF) is accessory activation domain.

This sequence belongs to the bZIP family. Homodimer. Interacts (via b-ZIP domain) with the DNA polymerase processivity factor BMRF1 (via N-terminus); this interaction may inhibit BZLF1-induced transcription of the BMRF1 promoter. Interacts with human UBN1, CRTC2 and RACK1. Interacts (via N-terminus) with human PAX5 (via N-terminus); this interaction inhibits BZLF1-mediated lytic viral reactivation. Interacts (via leucine-zipper domain) with host CEBPA; this interaction induces G1 host cell cycle arrest. Interacts (via C-terminus) with host TP53BP1 (via C-terminus); this interaction is involved in the activation of the viral lytic cycle. Interacts with host chromatin-remodeling ATPase INO80; this interaction participates to the activation of early lytic viral genes by BZLF1. Interacts with host regulator of chromatin SMARCA5/hSNF2H; this interaction participates to the activation of early lytic viral genes by BZLF1. Interacts with host PLSCR1/Phospholipid scramblase 1; this interaction negatively regulates the transcriptional regulatory activity of BZLF1 by preventing the formation of the BZLF1-CBP complex.

The protein resides in the host nucleus. Functionally, transcription factor that acts as a molecular switch to induce the transition from the latent to the lytic or productive phase of the virus cycle. Mediates the switch from the latent to the lytic cycle of infection in cells containing a highly methylated viral genome. Probably binds to silenced chromatin and recruits host chromatin-remodeling enzymes. Regulates this switch by binding to 2 types of ZEBRA response elements (ZREs): the CpG-free AP-1 like elements (latency) and the methylated CpG-containing elements (lytic replication). Activates preferentially the methylated forms of the viral lytic R (BRLF1) and Na (BRRF1) gene promoters, the latters being the first genes activated during Z-mediated reactivation in latently infected cells. BZLF1 and BRLF1 act together to trigger lytic replication. Also binds the lytic origin of replication, oriLyt. Induces G1 cell cycle arrest by stabilizing the host CCAAT/enhancer binding protein CEBPA. This function is important because the lytic cycle preferentially takes place in host cells arrested in G1. The chain is Lytic switch protein BZLF1 from Homo sapiens (Human).